Reading from the N-terminus, the 161-residue chain is EP300-interacting inhibitor of differentiation 2B (161 aa).

Disordered regions lie at residues 1-26 (MAEP…GTAS) and 54-77 (ARSM…GLAS).

As to quaternary structure, homodimer and heterodimer with EID2. Interacts with HDAC1 and HDAC2.

Its subcellular location is the nucleus. In terms of biological role, acts as a repressor of MYOD-dependent transcription, glucocorticoid receptor-dependent transcription, and muscle differentiation. The chain is EP300-interacting inhibitor of differentiation 2B from Homo sapiens (Human).